We begin with the raw amino-acid sequence, 75 residues long: Supwaprin-a (75 aa).

The signal sequence occupies residues Met-1–Gly-24. The region spanning Arg-27–Ile-72 is the WAP domain. Disulfide bonds link Cys-34–Cys-60, Cys-43–Cys-64, Cys-47–Cys-59, and Cys-53–Cys-68.

This sequence belongs to the venom waprin family. In terms of tissue distribution, expressed by the venom gland.

Its subcellular location is the secreted. Functionally, damages membranes of susceptible bacteria. Has no hemolytic activity. Not toxic to mice. Does not inhibit the proteinases elastase and cathepsin G. This Austrelaps superbus (Lowland copperhead snake) protein is Supwaprin-a.